A 333-amino-acid polypeptide reads, in one-letter code: Elongation factor Ts, mitochondrial (333 aa).

The N-terminal 17 residues, 1–17 (MLRTLRPTLPSRCLRLY), are a transit peptide targeting the mitochondrion.

This sequence belongs to the EF-Ts family.

It is found in the mitochondrion. In terms of biological role, associates with the EF-Tu.GDP complex and induces the exchange of GDP to GTP. It remains bound to the aminoacyl-tRNA.EF-Tu.GTP complex up to the GTP hydrolysis stage on the ribosome. The protein is Elongation factor Ts, mitochondrial of Coprinopsis cinerea (strain Okayama-7 / 130 / ATCC MYA-4618 / FGSC 9003) (Inky cap fungus).